The chain runs to 126 residues: MAEITKADVVAFIEKMTVLELAELVKELEEKFGVSAAAPVAVAAAAPAAAAEAAEEKTEFDVILKSAGANKINVIKVVRTLTSLGLKEAKDLVDGAPSPVKTGISKAEAEEAQKQLVEAGAEVEIK.

The protein belongs to the bacterial ribosomal protein bL12 family. As to quaternary structure, homodimer. Part of the ribosomal stalk of the 50S ribosomal subunit. Forms a multimeric L10(L12)X complex, where L10 forms an elongated spine to which 2 to 4 L12 dimers bind in a sequential fashion. Binds GTP-bound translation factors.

In terms of biological role, forms part of the ribosomal stalk which helps the ribosome interact with GTP-bound translation factors. Is thus essential for accurate translation. The sequence is that of Large ribosomal subunit protein bL12 from Trichlorobacter lovleyi (strain ATCC BAA-1151 / DSM 17278 / SZ) (Geobacter lovleyi).